Here is a 178-residue protein sequence, read N- to C-terminus: Cytidylate kinase (178 aa).

G7–T15 is an ATP binding site.

It belongs to the cytidylate kinase family. Type 2 subfamily.

The protein resides in the cytoplasm. It catalyses the reaction CMP + ATP = CDP + ADP. It carries out the reaction dCMP + ATP = dCDP + ADP. The polypeptide is Cytidylate kinase (Methanococcus maripaludis (strain DSM 14266 / JCM 13030 / NBRC 101832 / S2 / LL)).